The following is a 1095-amino-acid chain: 1-phosphatidylinositol 4,5-bisphosphate phosphodiesterase (1095 aa).

Residues 319-469 (MEMDQPLAHY…LKRKILIKNK (151 aa)) enclose the PI-PLC X-box domain. Residues His334 and His381 contribute to the active site. Substrate is bound by residues Lys467 and Lys469. Residues 487–529 (ELKTDDDPEEDASAGKPPEAAAAPAPAPEAAAAAEGAAEGGGG) form a disordered region. Residues 500-523 (AGKPPEAAAAPAPAPEAAAAAEGA) show a composition bias toward low complexity. The region spanning 550 to 666 (LSSMVNYAQP…GYLLKPDFMR (117 aa)) is the PI-PLC Y-box domain. Substrate is bound by residues Ser579 and Arg606. The C2 domain occupies 666–794 (RRADKDFDPF…SLRTEANFPM (129 aa)). 2 disordered regions span residues 842–863 (IEEQ…EKKE) and 1000–1030 (QAKM…LREK). Composition is skewed to basic and acidic residues over residues 852–863 (DAGKAKEEEKKE) and 1007–1030 (TAKE…LREK).

In terms of assembly, interacts with inaD. Abundantly expressed in the adult retina.

It carries out the reaction a 1,2-diacyl-sn-glycero-3-phospho-(1D-myo-inositol-4,5-bisphosphate) + H2O = 1D-myo-inositol 1,4,5-trisphosphate + a 1,2-diacyl-sn-glycerol + H(+). In terms of biological role, the production of the second messenger molecules diacylglycerol (DAG) and inositol 1,4,5-trisphosphate (IP3) is mediated by activated phosphatidylinositol-specific phospholipase C enzymes. Essential component of the phototransduction pathway. Essential downstream component of a hh-signaling pathway which regulates the Duox-dependent gut immune response to bacterial uracil; required for the activation of Cad99C and consequently Cad99C-dependent endosome formation, which is essential for the Duox-dependent production of reactive oxygen species (ROS) in response to intestinal bacterial infection. This Drosophila melanogaster (Fruit fly) protein is 1-phosphatidylinositol 4,5-bisphosphate phosphodiesterase.